The sequence spans 300 residues: Sporulation protein SPS18 (300 aa).

The 120-residue stretch at 11-130 (ENRKRLLRAK…LANEVRSNDI (120 aa)) folds into the Arf-GAP domain. The C4-type zinc finger occupies 28-51 (CFECKSVNPQFVSCSFGIFICVNC).

The protein is Sporulation protein SPS18 (SPS18) of Saccharomyces cerevisiae (strain ATCC 204508 / S288c) (Baker's yeast).